The following is a 479-amino-acid chain: Kynurenine 3-monooxygenase (479 aa).

Belongs to the aromatic-ring hydroxylase family. KMO subfamily. Requires FAD as cofactor.

Its subcellular location is the mitochondrion outer membrane. The catalysed reaction is L-kynurenine + NADPH + O2 + H(+) = 3-hydroxy-L-kynurenine + NADP(+) + H2O. The protein operates within cofactor biosynthesis; NAD(+) biosynthesis; quinolinate from L-kynurenine: step 1/3. Functionally, catalyzes the hydroxylation of L-kynurenine (L-Kyn) to form 3-hydroxy-L-kynurenine (L-3OHKyn). Required for synthesis of quinolinic acid. This chain is Kynurenine 3-monooxygenase, found in Chaetomium globosum (strain ATCC 6205 / CBS 148.51 / DSM 1962 / NBRC 6347 / NRRL 1970) (Soil fungus).